The chain runs to 469 residues: Putative dipeptidase SE_1424 (469 aa).

Histidine 84 contributes to the Zn(2+) binding site. The active site involves aspartate 86. Aspartate 115 serves as a coordination point for Zn(2+). Catalysis depends on glutamate 149, which acts as the Proton acceptor. 3 residues coordinate Zn(2+): glutamate 150, aspartate 173, and histidine 440.

This sequence belongs to the peptidase M20A family. It depends on Zn(2+) as a cofactor.

This Staphylococcus epidermidis (strain ATCC 12228 / FDA PCI 1200) protein is Putative dipeptidase SE_1424.